We begin with the raw amino-acid sequence, 348 residues long: Fe(3+) ions import ATP-binding protein FbpC (348 aa).

Residues 6 to 236 (LSLEGATVRF…PADAFVARFL (231 aa)) enclose the ABC transporter domain. 38–45 (GPSGSGKS) contacts ATP.

It belongs to the ABC transporter superfamily. Fe(3+) ion importer (TC 3.A.1.10) family. The complex is composed of two ATP-binding proteins (FbpC), two transmembrane proteins (FbpB) and a solute-binding protein (FbpA).

Its subcellular location is the cell membrane. The enzyme catalyses Fe(3+)(out) + ATP + H2O = Fe(3+)(in) + ADP + phosphate + H(+). Its function is as follows. Part of the ABC transporter complex FbpABC involved in Fe(3+) ions import. Responsible for energy coupling to the transport system. The sequence is that of Fe(3+) ions import ATP-binding protein FbpC from Streptomyces coelicolor (strain ATCC BAA-471 / A3(2) / M145).